Here is a 113-residue protein sequence, read N- to C-terminus: Small ribosomal subunit protein bS16 (113 aa).

The disordered stretch occupies residues 84-113 (PKPAYTEQPKKSAPKKRAQERAAAAAAAAA).

Belongs to the bacterial ribosomal protein bS16 family.

This Gluconacetobacter diazotrophicus (strain ATCC 49037 / DSM 5601 / CCUG 37298 / CIP 103539 / LMG 7603 / PAl5) protein is Small ribosomal subunit protein bS16.